The chain runs to 364 residues: MAALYPALTPEQKKELAEIAQRIVSNGKGILAADESTGTMGKRLSAIKVENVDENRRVYRQLLFSSDPSVTKAIGGVIFYEETLYQKTDDGTPFVKLIKDRGIVVGIKVDKGTVPLAGTDGESTTQGLDGLAERCARYKKDGADFAKWRCVLKISKNTPSALAIAENANVLARYASICQQNGLVPIVEPEILPDGDHDLKTCQYVTEKVLAATYKALSDHHVYLEGSLLKPNMVTAGQASKIRCSPQEVAMATVTALRRTVPSAVPGITFLSGGQSEEDASLNLNAINQLPLERPWALSFSYGRALQASVLKAWAGAPANIPAAKKEFEKRAAINGLAAQGKYVPAGSSGSAASESLFIANHNY.

2 residues coordinate substrate: Arg-56 and Lys-147. Lys-230 serves as the catalytic Schiff-base intermediate with dihydroxyacetone-P.

The protein belongs to the class I fructose-bisphosphate aldolase family. As to quaternary structure, homotetramer. As to expression, expressed mainly in the liver and also in brain and other tissues, except for the heart muscle.

The catalysed reaction is beta-D-fructose 1,6-bisphosphate = D-glyceraldehyde 3-phosphate + dihydroxyacetone phosphate. It functions in the pathway carbohydrate degradation; glycolysis; D-glyceraldehyde 3-phosphate and glycerone phosphate from D-glucose: step 4/4. This is Fructose-bisphosphate aldolase, non-muscle type from Lethenteron camtschaticum (Japanese lamprey).